Consider the following 470-residue polypeptide: MTELPDNTRWQLWIVAFGFFMQSLDTTIVNTALPSMAKSLGESPLHMHMVVVSYVLTVAVMLPASGWLADKIGVRNIFFAAIVLFTLGSLFCALSGTLNQLVLARVLQGVGGAMMVPVGRLTVMKIVPRAQYMAAMTFVTLPGQIGPLLGPALGGVLVEYASWHWIFLINIPVGIVGAMATFMLMPNYTIETRRFDLPGFLLLAIGMAVLTLALDGSKSMGISPWTLAGLAAGGAAAILLYLFHAKKNSGALFSLRLFRTPTFSLGLLGSFAGRIGSGMLPFMTPVFLQIGLGFSPFHAGLMMIPMVLGSMGMKRIVVQIVNRFGYRRVLVATTLGLALVSLLFMSVALLGWYYLLPLVLLLQGMVNSARFSSMNTLTLKDLPDTLASSGNSLLSMIMQLSMSIGVTIAGMLLGMFGQQHIGIDSSATHHVFMYTWLCMAVIIALPAIIFARVPNDTQQNMVISRRKRSL.

Residues 1–11 (MTELPDNTRWQ) lie on the Periplasmic side of the membrane. The chain crosses the membrane as a helical span at residues 12-32 (LWIVAFGFFMQSLDTTIVNTA). The Cytoplasmic segment spans residues 33-48 (LPSMAKSLGESPLHMH). A helical membrane pass occupies residues 49 to 69 (MVVVSYVLTVAVMLPASGWLA). Residues 70–76 (DKIGVRN) are Periplasmic-facing. The chain crosses the membrane as a helical span at residues 77-97 (IFFAAIVLFTLGSLFCALSGT). Residues 98–101 (LNQL) lie on the Cytoplasmic side of the membrane. The helical transmembrane segment at 102–124 (VLARVLQGVGGAMMVPVGRLTVM) threads the bilayer. Residues 125–137 (KIVPRAQYMAAMT) lie on the Periplasmic side of the membrane. A helical transmembrane segment spans residues 138–158 (FVTLPGQIGPLLGPALGGVLV). Topologically, residues 159 to 164 (EYASWH) are cytoplasmic. A helical transmembrane segment spans residues 165-185 (WIFLINIPVGIVGAMATFMLM). Topologically, residues 186–196 (PNYTIETRRFD) are periplasmic. The helical transmembrane segment at 197–217 (LPGFLLLAIGMAVLTLALDGS) threads the bilayer. At 218-224 (KSMGISP) the chain is on the cytoplasmic side. A helical membrane pass occupies residues 225–245 (WTLAGLAAGGAAAILLYLFHA). Residues 246 to 262 (KKNSGALFSLRLFRTPT) are Periplasmic-facing. The helical transmembrane segment at 263-283 (FSLGLLGSFAGRIGSGMLPFM) threads the bilayer. Topologically, residues 284–285 (TP) are cytoplasmic. Residues 286 to 306 (VFLQIGLGFSPFHAGLMMIPM) form a helical membrane-spanning segment. Over 307–341 (VLGSMGMKRIVVQIVNRFGYRRVLVATTLGLALVS) the chain is Periplasmic. Residues 342-362 (LLFMSVALLGWYYLLPLVLLL) form a helical membrane-spanning segment. Residues 363-395 (QGMVNSARFSSMNTLTLKDLPDTLASSGNSLLS) are Cytoplasmic-facing. The chain crosses the membrane as a helical span at residues 396 to 416 (MIMQLSMSIGVTIAGMLLGMF). Residues 417-430 (GQQHIGIDSSATHH) lie on the Periplasmic side of the membrane. The helical transmembrane segment at 431 to 451 (VFMYTWLCMAVIIALPAIIFA) threads the bilayer. Over 452-470 (RVPNDTQQNMVISRRKRSL) the chain is Cytoplasmic.

Belongs to the major facilitator superfamily. TCR/Tet family.

The protein localises to the cell inner membrane. The sequence is that of Putative multidrug resistance protein MdtD from Salmonella agona (strain SL483).